A 220-amino-acid chain; its full sequence is Probable L-serine dehydratase, beta chain (220 aa).

One can recognise an ACT domain in the interval Ala148–Asp220.

The protein belongs to the iron-sulfur dependent L-serine dehydratase family. In terms of assembly, heterodimer of an alpha chain and a beta chain. The cofactor is [4Fe-4S] cluster.

The enzyme catalyses L-serine = pyruvate + NH4(+). It participates in carbohydrate biosynthesis; gluconeogenesis. The protein is Probable L-serine dehydratase, beta chain (sdaAB) of Bacillus subtilis (strain 168).